Here is a 545-residue protein sequence, read N- to C-terminus: MTTKYIFVTGGVVSSLGKGIAAASLAAILEARGLDVTIMKLDPYINVDPGTMSPTQHGEVFVTEDGAETDLDLGHYERFIRTKMTRRNNFTTGRIYADVLRKERRGDYLGATIQVIPHITNAIKERVIAGAEGHQVAIVEVGGTVGDIESLPFLEAIRQLAAEVGRNNAMFMHLTLVPYLAAAGEVKTKPTQHSVKELLSIGIQPDVLICRSDRAIPAVERAKIALFCNVPERAVISMKDVDSIYKIPALLKSQNLDSYFTERFGLECKEADLAEWEQVIYEEANPTAEVTIGMVGKYVSLPDAYKSVNEALKHGGLKTRLSVNIKYIDSQDIETRGAELLEGLDAILVPGGFGERGVEGKIQAAQYARENKIPYLGICLGMQVAMIEFARNVAGMEGAHSSEFKKDCAYPVVGLITEWVDDEGNIETRTEKSDLGGTMRLGSQLCHLVEGSKVRQMYGSPTIYERHRHRYEVNNKLLPQIEAAGLKVTGLSADKKLVEIIEIPDHPWFVAAQFHPEFTSTPRDGHALFAGFVKAAGEYQKRNLK.

The tract at residues 1–266 is amidoligase domain; the sequence is MTTKYIFVTG…DSYFTERFGL (266 aa). Serine 14 is a binding site for CTP. Residue serine 14 coordinates UTP. Residues 15–20 and aspartate 72 each bind ATP; that span reads SLGKGI. Positions 72 and 140 each coordinate Mg(2+). Residues 147 to 149, 187 to 192, and lysine 223 each bind CTP; these read DIE and KTKPTQ. Residues 187–192 and lysine 223 contribute to the UTP site; that span reads KTKPTQ. 239 to 241 lines the ATP pocket; that stretch reads KDV. In terms of domain architecture, Glutamine amidotransferase type-1 spans 291–542; it reads TIGMVGKYVS…VKAAGEYQKR (252 aa). Glycine 352 is an L-glutamine binding site. Cysteine 379 serves as the catalytic Nucleophile; for glutamine hydrolysis. L-glutamine is bound by residues 380 to 383, glutamate 403, and arginine 470; that span reads LGMQ. Catalysis depends on residues histidine 515 and glutamate 517.

The protein belongs to the CTP synthase family. Homotetramer.

The enzyme catalyses UTP + L-glutamine + ATP + H2O = CTP + L-glutamate + ADP + phosphate + 2 H(+). It catalyses the reaction L-glutamine + H2O = L-glutamate + NH4(+). The catalysed reaction is UTP + NH4(+) + ATP = CTP + ADP + phosphate + 2 H(+). It functions in the pathway pyrimidine metabolism; CTP biosynthesis via de novo pathway; CTP from UDP: step 2/2. Allosterically activated by GTP, when glutamine is the substrate; GTP has no effect on the reaction when ammonia is the substrate. The allosteric effector GTP functions by stabilizing the protein conformation that binds the tetrahedral intermediate(s) formed during glutamine hydrolysis. Inhibited by the product CTP, via allosteric rather than competitive inhibition. Its function is as follows. Catalyzes the ATP-dependent amination of UTP to CTP with either L-glutamine or ammonia as the source of nitrogen. Regulates intracellular CTP levels through interactions with the four ribonucleotide triphosphates. The chain is CTP synthase from Aeromonas hydrophila subsp. hydrophila (strain ATCC 7966 / DSM 30187 / BCRC 13018 / CCUG 14551 / JCM 1027 / KCTC 2358 / NCIMB 9240 / NCTC 8049).